The chain runs to 370 residues: S-adenosylmethionine decarboxylase proenzyme (370 aa).

Position 28 (phenylalanine 28) interacts with substrate. Residues glutamate 29 and glutamate 32 contribute to the active site. Glutamate 85 is a binding site for substrate. The Schiff-base intermediate with substrate; via pyruvic acid role is filled by serine 86. Serine 86 carries the post-translational modification Pyruvic acid (Ser); by autocatalysis. Cysteine 100 serves as the catalytic Proton donor; for catalytic activity. Residues serine 249 and histidine 262 each act as proton acceptor; for processing activity in the active site. A substrate-binding site is contributed by glutamate 266.

This sequence belongs to the eukaryotic AdoMetDC family. As to quaternary structure, forms a heterodimer with catalytically inactive AdoMetDC prozyme; heterodimerization is required to activate AdoMetDC. It depends on pyruvate as a cofactor. In terms of processing, is synthesized initially as an inactive proenzyme. Formation of the active enzyme involves a self-maturation process in which the active site pyruvoyl group is generated from an internal serine residue via an autocatalytic post-translational modification. Two non-identical subunits are generated from the proenzyme in this reaction, and the pyruvate is formed at the N-terminus of the alpha chain, which is derived from the carboxyl end of the proenzyme. The post-translation cleavage follows an unusual pathway, termed non-hydrolytic serinolysis, in which the side chain hydroxyl group of the serine supplies its oxygen atom to form the C-terminus of the beta chain, while the remainder of the serine residue undergoes an oxidative deamination to produce ammonia and the pyruvoyl group blocking the N-terminus of the alpha chain.

The catalysed reaction is S-adenosyl-L-methionine + H(+) = S-adenosyl 3-(methylsulfanyl)propylamine + CO2. The protein operates within amine and polyamine biosynthesis; S-adenosylmethioninamine biosynthesis; S-adenosylmethioninamine from S-adenosyl-L-methionine: step 1/1. Its activity is regulated as follows. Allosterically activated by AdoMetDC prozyme. Activated by putrescine and to a lesser extent by spermidine, norspermidine and spermine. Inhibited by 5'-([(Z)-4-amino-2-butenyl]methylamino)-5'-deoxyadenosine (MDL 73811). Its function is as follows. In association with the catalytically inactive AdoMetDC prozyme, catalyzes the decarboxylation of S-adenosyl-L-methionine which is essential for the biosynthesis of the polyamine spermidine. Required for growth and survival during the bloodstream life cycle stage. This is S-adenosylmethionine decarboxylase proenzyme from Trypanosoma brucei brucei.